The chain runs to 542 residues: Aspartate kinase FUB3 (542 aa).

ACT domains follow at residues 404–472 (ILSN…VLPD) and 478–542 (LVGA…KSAI).

This sequence belongs to the aspartokinase family.

The catalysed reaction is L-aspartate + ATP = 4-phospho-L-aspartate + ADP. Its pathway is mycotoxin biosynthesis. Its function is as follows. Aspartate kinase; part of the gene cluster that mediates the biosynthesis of fusaric acid, a mycotoxin with low to moderate toxicity to animals and humans, but with high phytotoxic properties. L-aspartate is suggested as fusaric acid amino acid precursor that is activated and further processed to O-acetyl-L-homoserine by cluster enzymes aspartate kinase FUB3 and homoserine O-acetyltransferase FUB5, as well as enzymes of the primary metabolism. The polyketide synthase (PKS) FUB1 generates the triketide trans-2-hexenal which is presumptively released by the hydrolase FUB4 and linked to the NRPS-bound amino acid precursor by NAD(P)-dependent dehydrogenase FUB6. FUB1, FUB4, and the non-canonical NRPS Fub8 may form an enzyme complex. Further processing of the NRPS-bound intermediate might be carried out by FUB6 and the sulfhydrylase FUB7, enabling a spontaneous electrocyclization to close the carbon backbone of fusaric acid. Dihydrofusaric acid is likely to be released via reduction by the thioester reductase (TR) domain of FUB8 whereupon the final oxidation to fusaric acid may (also) be performed by the FMN-dependent dehydrogenase FUB9. The sequence is that of Aspartate kinase FUB3 from Fusarium oxysporum f. sp. lycopersici (strain 4287 / CBS 123668 / FGSC 9935 / NRRL 34936) (Fusarium vascular wilt of tomato).